A 399-amino-acid chain; its full sequence is C-type lectin domain family 4 member M (399 aa).

Topologically, residues 1–49 (MSDSKEQRVQPLGLLEEDPTTSGIRLFPRDFQFQQTHGHKSSTGCLGHG) are cytoplasmic. The Endocytosis signal motif lies at 14–15 (LL). Residues 50–70 (PLVLQLLSFTLLAGVLVAILV) form a helical; Signal-anchor for type II membrane protein membrane-spanning segment. The Extracellular portion of the chain corresponds to 71 to 399 (QVYKVPSSLS…KKPTACFRDE (329 aa)). Residue N92 is glycosylated (N-linked (GlcNAc...) asparagine). 7 consecutive repeat copies span residues 108-130 (KLQEIYQELIQLKAAVGELPEKS), 131-153 (TLQEIYQELTRLKAAVGELPEKS), 154-176 (RLQEIYQELTRLKAAVGELPEKS), 177-199 (KQQEIYQELTRLKAAVGELPEKS), 200-222 (KQQEIYQELTRLKAAVGELPEKS), 223-245 (KQQEIYQELTRLKAAVGELPDQS), and 246-268 (KQQQIYQELTDLKTAFERLCCRC). Residues 108-269 (KLQEIYQELI…AFERLCCRCP (162 aa)) are 7 X approximate tandem repeats. 4 cysteine pairs are disulfide-bonded: C265-C395, C268-C279, C296-C389, and C368-C381. A C-type lectin domain is found at 274 to 390 (FFQGNCYFIS…CNVDNYWICK (117 aa)). Ca(2+)-binding residues include E359, N361, S363, E366, N377, and D378. N361 is a glycosylation site (N-linked (GlcNAc...) asparagine).

Homotetramer.

The protein resides in the membrane. In terms of biological role, probable pathogen-recognition receptor involved in peripheral immune surveillance in liver. May mediate the endocytosis of pathogens which are subsequently degraded in lysosomal compartments. Probably recognizes in a calcium-dependent manner high mannose N-linked oligosaccharides in a variety of pathogen antigens. Is a receptor for ICAM3, probably by binding to mannose-like carbohydrates. The sequence is that of C-type lectin domain family 4 member M (CLEC4M) from Hylobates lar (Lar gibbon).